Here is a 520-residue protein sequence, read N- to C-terminus: Cytochrome P450 monooxygenase btcC (520 aa).

Residues 2-22 (IFLLTLAGLKVLSIVILFGII) form a helical membrane-spanning segment. Asn-177 carries N-linked (GlcNAc...) asparagine glycosylation. A heme-binding site is contributed by Cys-448. Asn-511 carries N-linked (GlcNAc...) asparagine glycosylation.

The protein belongs to the cytochrome P450 family. It depends on heme as a cofactor.

It is found in the membrane. It participates in secondary metabolite biosynthesis; terpenoid biosynthesis. Cytochrome P4590 monooxygenase part of the gene cluster that mediates the biosynthesis of betaestacins. The bifunctional terpene synthase btcA converts isopentenyl diphosphate (IPP) and dimethylallyl diphosphate (DMAPP) into the sesterterpene betaestacin I. The C-terminal prenyltransferase (PT) domain of btcA catalyzes formation of GFPP, whereas the N-terminal terpene cyclase (TC) domain catalyzes the cyclization of GFPP into betaestacin I. The cytochrome P450 monooxygenase btcB oxidizes the C25 methyl group of betaestacin I to yield the carboxylic acid betaestacin IV via the alcohol betaestacin III. The cytochrome P450 monooxygenase btcC further catalyzes the multistep oxidation of betaestacin IV to produce several compounds, including betaestacins Va, Vb, Vc and VI. In Colletotrichum orbiculare (strain 104-T / ATCC 96160 / CBS 514.97 / LARS 414 / MAFF 240422) (Cucumber anthracnose fungus), this protein is Cytochrome P450 monooxygenase btcC.